The chain runs to 1187 residues: BAI1-associated protein 3 (1187 aa).

Residues 55–81 form a disordered region; the sequence is SFRRRTEQDPGSASADPQEPATGAWKP. Residues 176–335 enclose the C2 1 domain; it reads SLEEHTEAIE…VKSARANGTA (160 aa). Residues aspartate 211, aspartate 217, aspartate 295, and aspartate 297 each coordinate Ca(2+). An MHD1 domain is found at 663-784; that stretch reads FELYLTLADL…EATLFYTELL (122 aa). One can recognise an MHD2 domain in the interval 888–996; sequence DEAVAPLMKY…CSTRECIEQF (109 aa). The region spanning 1010-1136 is the C2 2 domain; that stretch reads RFGRLSVRCH…GVARPQVGGG (127 aa). Leucine 1040, aspartate 1041, aspartate 1047, aspartate 1105, aspartate 1107, serine 1110, and aspartate 1113 together coordinate Ca(2+).

It belongs to the unc-13 family. As to quaternary structure, interacts with ADGRB1; this interaction is direct. Interacts with endosomal SNARE proteins VAMP3, VAMP4, STX6 and STX16; this interaction is increased in the presence of calcium. It depends on Ca(2+) as a cofactor. Predominantly expressed in brain. Also expressed in nonneural tissues such as breast and testes epithelium.

The protein localises to the cytoplasm. It localises to the cytosol. It is found in the recycling endosome membrane. Its subcellular location is the late endosome membrane. The protein resides in the golgi apparatus. The protein localises to the trans-Golgi network membrane. It localises to the cell membrane. In terms of biological role, functions in endosome to Golgi retrograde transport. In response to calcium influx, may interact with SNARE fusion receptors and membrane phospholipids to mediate endosome fusion with the trans-Golgi network. By promoting the recycling of secretory vesicle transmembrane proteins, it indirectly controls dense-core secretory vesicle biogenesis, maturation and their ability to mediate the constitutive and regulated secretion of neurotransmitters and hormones. May regulate behavior and food intake by controlling calcium-stimulated exocytosis of neurotransmitters including NPY and serotonin and hormones like insulin. Proposed to play a role in hypothalamic neuronal firing by modulating gamma-aminobutyric acid (GABA)ergic inhibitory neurotransmission. This is BAI1-associated protein 3 from Homo sapiens (Human).